Reading from the N-terminus, the 325-residue chain is RepFIB replication protein A (325 aa).

The interval 279–298 (APNDESKENPLPPSPAEKVS) is disordered.

The protein belongs to the initiator RepB protein family.

Functionally, this protein is essential for plasmid replication; it is involved in copy control functions. In vitro, binds to the DNA repeat units, BCDD'D'', EFG and HIJ. This Escherichia coli protein is RepFIB replication protein A (repA).